The chain runs to 609 residues: Glutamine--fructose-6-phosphate aminotransferase [isomerizing] (609 aa).

Residue cysteine 2 is the Nucleophile; for GATase activity of the active site. The region spanning cysteine 2 to lysine 219 is the Glutamine amidotransferase type-2 domain. 2 SIS domains span residues glutamate 288–glutamate 428 and methionine 460–proline 599. The active-site For Fru-6P isomerization activity is lysine 604.

In terms of assembly, homodimer.

The protein resides in the cytoplasm. The enzyme catalyses D-fructose 6-phosphate + L-glutamine = D-glucosamine 6-phosphate + L-glutamate. Catalyzes the first step in hexosamine metabolism, converting fructose-6P into glucosamine-6P using glutamine as a nitrogen source. This is Glutamine--fructose-6-phosphate aminotransferase [isomerizing] from Buchnera aphidicola subsp. Acyrthosiphon pisum (strain APS) (Acyrthosiphon pisum symbiotic bacterium).